Here is a 72-residue protein sequence, read N- to C-terminus: Translation initiation factor IF-1 (72 aa).

One can recognise an S1-like domain in the interval 1–72 (MSKSDIIEMQ…TRGRITWRAK (72 aa)).

Belongs to the IF-1 family. As to quaternary structure, component of the 30S ribosomal translation pre-initiation complex which assembles on the 30S ribosome in the order IF-2 and IF-3, IF-1 and N-formylmethionyl-tRNA(fMet); mRNA recruitment can occur at any time during PIC assembly.

The protein resides in the cytoplasm. Its function is as follows. One of the essential components for the initiation of protein synthesis. Stabilizes the binding of IF-2 and IF-3 on the 30S subunit to which N-formylmethionyl-tRNA(fMet) subsequently binds. Helps modulate mRNA selection, yielding the 30S pre-initiation complex (PIC). Upon addition of the 50S ribosomal subunit IF-1, IF-2 and IF-3 are released leaving the mature 70S translation initiation complex. The polypeptide is Translation initiation factor IF-1 (Clostridium perfringens (strain 13 / Type A)).